A 254-amino-acid chain; its full sequence is tRNA (guanine-N(1)-)-methyltransferase (254 aa).

S-adenosyl-L-methionine contacts are provided by residues Gly-113 and 133–138; that span reads IGDYVL.

It belongs to the RNA methyltransferase TrmD family. Homodimer.

It localises to the cytoplasm. It catalyses the reaction guanosine(37) in tRNA + S-adenosyl-L-methionine = N(1)-methylguanosine(37) in tRNA + S-adenosyl-L-homocysteine + H(+). Its function is as follows. Specifically methylates guanosine-37 in various tRNAs. This is tRNA (guanine-N(1)-)-methyltransferase from Edwardsiella ictaluri (strain 93-146).